The chain runs to 308 residues: CD276 antigen homolog (308 aa).

An N-terminal signal peptide occupies residues 1-15 (MAALCLLLLLSLAEA). At 16 to 236 (IDLRVPELPV…VTGQHLSFPP (221 aa)) the chain is on the extracellular side. Residues 21–125 (PELPVIGLLD…VQNSSSASVS (105 aa)) form the Ig-like V-type domain. Disulfide bonds link Cys37–Cys112 and Cys155–Cys210. The Ig-like C2-type domain maps to 135–228 (PTLHLEPSEA…DVTHASLTVT (94 aa)). The helical transmembrane segment at 237–257 (LVLWVTVGLSICLLCLLVALA) threads the bilayer. Topologically, residues 258–308 (CVCRKHLKQTCEEEQENAGNEEHEENGELKTAMQPLKVTSPGEDDDAECLE) are cytoplasmic. Positions 270-308 (EEQENAGNEEHEENGELKTAMQPLKVTSPGEDDDAECLE) are disordered. The span at 299–308 (GEDDDAECLE) shows a compositional bias: acidic residues.

Belongs to the immunoglobulin superfamily. BTN/MOG family.

It is found in the membrane. Functionally, modulates immune responses. The chain is CD276 antigen homolog (cd276) from Xenopus laevis (African clawed frog).